The primary structure comprises 146 residues: Acidic phospholipase A2 S5-32M (146 aa).

Positions 1 to 19 are cleaved as a signal peptide; the sequence is MYPAHLLVLLAVCVSLLGA. Positions 20-27 are excised as a propeptide; the sequence is ASIPPQPL. 7 cysteine pairs are disulfide-bonded: C38/C98, C54/C145, C56/C72, C71/C126, C78/C119, C87/C112, and C105/C117. 3 residues coordinate Ca(2+): Y55, G57, and G59. H75 is an active-site residue. Residue D76 participates in Ca(2+) binding. The active site involves D120.

Belongs to the phospholipase A2 family. Group I subfamily. D49 sub-subfamily. The cofactor is Ca(2+). Expressed by the venom gland.

It is found in the secreted. The enzyme catalyses a 1,2-diacyl-sn-glycero-3-phosphocholine + H2O = a 1-acyl-sn-glycero-3-phosphocholine + a fatty acid + H(+). Functionally, snake venom phospholipase A2 (PLA2) that inhibits collagen-induced platelet aggregation. PLA2 catalyzes the calcium-dependent hydrolysis of the 2-acyl groups in 3-sn-phosphoglycerides. The protein is Acidic phospholipase A2 S5-32M of Austrelaps superbus (Lowland copperhead snake).